A 449-amino-acid polypeptide reads, in one-letter code: Elongation factor 1-alpha (449 aa).

Positions 5–230 constitute a tr-type G domain; it reads KVHINIVVIG…DQINEPKRPS (226 aa). The tract at residues 14 to 21 is G1; that stretch reads GHVDSGKS. 14 to 21 provides a ligand contact to GTP; the sequence is GHVDSGKS. Residue K55 is modified to N6,N6-dimethyllysine. Positions 70–74 are G2; it reads GITID. The residue at position 79 (K79) is an N6,N6,N6-trimethyllysine. The interval 91-94 is G3; it reads DAPG. GTP is bound by residues 91–95 and 153–156; these read DAPGH and NKMD. The segment at 153-156 is G4; sequence NKMD. Position 187 is an N6,N6,N6-trimethyllysine (K187). Residues 194–196 are G5; that stretch reads SGF. K261 bears the N6-methyllysine mark. E289 bears the 5-glutamyl glycerylphosphorylethanolamine mark. An N6,N6,N6-trimethyllysine modification is found at K306. E362 is modified (5-glutamyl glycerylphosphorylethanolamine). Residue K396 is modified to N6,N6,N6-trimethyllysine.

It belongs to the TRAFAC class translation factor GTPase superfamily. Classic translation factor GTPase family. EF-Tu/EF-1A subfamily.

The protein localises to the cytoplasm. Its function is as follows. This protein promotes the GTP-dependent binding of aminoacyl-tRNA to the A-site of ribosomes during protein biosynthesis. This Daucus carota (Wild carrot) protein is Elongation factor 1-alpha.